The sequence spans 76 residues: Large ribosomal subunit protein uL29 (76 aa).

This sequence belongs to the universal ribosomal protein uL29 family.

The polypeptide is Large ribosomal subunit protein uL29 (Corynebacterium glutamicum (strain R)).